A 780-amino-acid chain; its full sequence is Zinc finger protein GLIS3 (780 aa).

Composition is skewed to polar residues over residues 80-92 and 106-115; these read PSLSSSHSSQNGT and VSGNSVSNSL. Disordered regions lie at residues 80–148 and 290–315; these read PSLS…KKRA and PSALPLPLPPPQGPPPPYHAHPHLHH. A compositionally biased stretch (basic residues) spans 135-148; that stretch reads SATRAHSTRSKKRA. The span at 293–308 shows a compositional bias: pro residues; that stretch reads LPLPLPPPQGPPPPYH. The C2H2-type 1 zinc-finger motif lies at 345–370; that stretch reads HCCRWIDCSALYDQQEELVRHIEKVH. The C2H2-type 2; atypical zinc-finger motif lies at 379–406; that stretch reads FTCFWTGCPRRYKPFNARYKLLIHMRVH. 3 C2H2-type zinc fingers span residues 412–436, 442–466, and 472–496; these read NKCTFEGCKKAFSRLENLKIHLRSH, YLCQHPGCQKAFSNSSDRAKHQRTH, and YACQIPGCTKRYTDPSSLRKHVKAH. Disordered regions lie at residues 485–512 and 527–670; these read DPSSLRKHVKAHSSREQQARKKLRSSTE and LQPA…QPNG. Positions 490–506 match the Bipartite nuclear localization signal motif; it reads RKHVKAHSSREQQARKK. The segment covering 497–512 has biased composition (basic and acidic residues); sequence SSREQQARKKLRSSTE. Low complexity predominate over residues 567-577; sequence HSTRSGTAAGA. A compositionally biased stretch (polar residues) spans 593 to 605; the sequence is VQGSPHNPSSQLP.

It belongs to the GLI C2H2-type zinc-finger protein family. In terms of tissue distribution, in the embryo, expressed at high levels in the kidney and testis. In the adult, expressed at high levels in the kidney and uterus and at lower levels in the brain, lung, skeletal muscle and pancreas.

The protein resides in the nucleus. In terms of biological role, acts both as a repressor and activator of transcription. Binds to the consensus sequence 5'-GACCACCCAC-3'. The sequence is that of Zinc finger protein GLIS3 from Mus musculus (Mouse).